The primary structure comprises 472 residues: MPRTLFDKIWDTHIVRPQTAETPAVLYIDLHLIHEVTSPQAFTELRRRGLKVRRPDRTLATMDHSTPTTPRGPDGIIPVVDAQAAAQLRQLEQNCADFGIPLFALGSERQGIVHVIGPEQGLTQPGMTIVCGDSHTSTHGAFGALAFGIGTSEVAHVLATQCLIQNRPKTMEVRVDGRLKPGVTAKDIILAIIARYGVGAGVGHVFEYTGEAIRALSMEERMTICNMSIEGGARAGMIAPDDTTFQYIAGRPFAPKGAAWDEAVAYWRTLPTDDGAVYDRTITLDASQLTPMITYGTNPGMGIPIDGRIPTPEELPDQAARQALDKALRYMDLRPGQPLLGQKVDVVFLGSCTNSRISDLRMAASVLKGRKIAEGVRMMVVPGSQQVKKQAEAEGLDRIFREAGAEWREAGCSACLGMNDDKVPPGKYAVSTSNRNFEGRQGPGARTLLASPLTAVASAIEGVVADPRKYVG.

Residues cysteine 352, cysteine 412, and cysteine 415 each contribute to the [4Fe-4S] cluster site.

This sequence belongs to the aconitase/IPM isomerase family. LeuC type 1 subfamily. Heterodimer of LeuC and LeuD. Requires [4Fe-4S] cluster as cofactor.

It carries out the reaction (2R,3S)-3-isopropylmalate = (2S)-2-isopropylmalate. It participates in amino-acid biosynthesis; L-leucine biosynthesis; L-leucine from 3-methyl-2-oxobutanoate: step 2/4. Functionally, catalyzes the isomerization between 2-isopropylmalate and 3-isopropylmalate, via the formation of 2-isopropylmaleate. This Roseiflexus castenholzii (strain DSM 13941 / HLO8) protein is 3-isopropylmalate dehydratase large subunit.